We begin with the raw amino-acid sequence, 411 residues long: MSRYVFTSESVTEGHPDKICDQVSDAVLDALLAQDPSSRVACETVVNTGLCMITGEVTSKAQVDFIHLVRNVIKEIGYSGARAGGFDANSCAVLVALDQQSPDIAQGVNEADDHAGDPLDLVGAGDQGIMFGYACNETPELMPLPISLAHRLSRRLAEVRHNGTLGYLLPDGKTQVSVVYENDKPVSIDTILISTQHTAEVDGISDEQGIRERITEDLWTHVVEPATADLALKPSREATKYLVNPTGKFVVGGPQGDAGLTGRKIIVDTYGGYARHGGGAFSGKDPTKVDRSAAYAARYVAKCLVAAGLAERAEVQLSYAIGVAKPVSILVESFGTSALANDALTALVQEHFDLRPGAIIETFGLRNLPQQRGGCFYQDTAAYGHFGRNDLNAPWEDVTAKSQELKQVAAA.

ATP is bound at residue H15. D17 is a Mg(2+) binding site. Residue E43 participates in K(+) binding. L-methionine is bound by residues E56 and Q100. Positions 100 to 110 (QSPDIAQGVNE) are flexible loop. ATP is bound by residues 171–173 (DGK), 248–249 (KF), D257, 263–264 (RK), A280, and K284. Residue D257 participates in L-methionine binding. L-methionine is bound at residue K288.

Belongs to the AdoMet synthase family. Homotetramer; dimer of dimers. The cofactor is Mg(2+). It depends on K(+) as a cofactor.

Its subcellular location is the cytoplasm. The catalysed reaction is L-methionine + ATP + H2O = S-adenosyl-L-methionine + phosphate + diphosphate. It functions in the pathway amino-acid biosynthesis; S-adenosyl-L-methionine biosynthesis; S-adenosyl-L-methionine from L-methionine: step 1/1. Functionally, catalyzes the formation of S-adenosylmethionine (AdoMet) from methionine and ATP. The overall synthetic reaction is composed of two sequential steps, AdoMet formation and the subsequent tripolyphosphate hydrolysis which occurs prior to release of AdoMet from the enzyme. The sequence is that of S-adenosylmethionine synthase from Synechococcus sp. (strain CC9605).